Reading from the N-terminus, the 597-residue chain is Elongation factor 4 (597 aa).

A tr-type G domain is found at 2–184 (KHIRNFSIIA…TIVKSIPAPE (183 aa)). GTP-binding positions include 14-19 (DHGKST) and 131-134 (NKID).

Belongs to the TRAFAC class translation factor GTPase superfamily. Classic translation factor GTPase family. LepA subfamily.

It localises to the cell inner membrane. The enzyme catalyses GTP + H2O = GDP + phosphate + H(+). In terms of biological role, required for accurate and efficient protein synthesis under certain stress conditions. May act as a fidelity factor of the translation reaction, by catalyzing a one-codon backward translocation of tRNAs on improperly translocated ribosomes. Back-translocation proceeds from a post-translocation (POST) complex to a pre-translocation (PRE) complex, thus giving elongation factor G a second chance to translocate the tRNAs correctly. Binds to ribosomes in a GTP-dependent manner. This chain is Elongation factor 4, found in Aliivibrio fischeri (strain MJ11) (Vibrio fischeri).